We begin with the raw amino-acid sequence, 104 residues long: UPF0145 protein DET1617 (104 aa).

This sequence belongs to the UPF0145 family.

The protein is UPF0145 protein DET1617 of Dehalococcoides mccartyi (strain ATCC BAA-2266 / KCTC 15142 / 195) (Dehalococcoides ethenogenes (strain 195)).